A 424-amino-acid chain; its full sequence is MAKNIQAIRGMNDYLPGETAIWQRIEGTLKNVLGSYGYSEIRLPIVEQTPLFKRAIGEVTDVVEKEMYTFEDRNGDSLTLRPEGTAGCVRAGIEHGLLYNQEQRLWYIGPMFRHERPQKGRYRQFHQLGAEVFGLQGPDIDAELIMLTARWWRALGIAEHVSLELNSIGSLEARANYRDALVAFLEQHQETLDEDCKRRMYTNPLRVLDSKNPDVQALLNDAPVLGDYLDDDSREHFAGLCKLLDAAGIAYTVNQRLVRGLDYYNRTVFEWVTNSLGSQGTVCAGGRYDGLVEQLGGRATPAVGFAMGLERLVLLVQAVNPEFIASPVVDIYLVAAGAQTQSAAMTLAERLRDEMPGVKLMTNHGGGNFKKQFARADKWGARIALVLGESEVADGTVVVKDLRSGEQTAVAQDSVAAHLRTLLG.

This sequence belongs to the class-II aminoacyl-tRNA synthetase family. As to quaternary structure, homodimer.

It is found in the cytoplasm. It carries out the reaction tRNA(His) + L-histidine + ATP = L-histidyl-tRNA(His) + AMP + diphosphate + H(+). The protein is Histidine--tRNA ligase of Salmonella heidelberg (strain SL476).